Reading from the N-terminus, the 371-residue chain is Cytochrome b (371 aa).

4 consecutive transmembrane segments (helical) span residues 25–45, 69–90, 105–125, and 170–190; these read FGSM…FLAI, WTMQ…YIHI, WLSG…GYVL, and FFAL…AHIM. His75 and His89 together coordinate heme b. Residues His174 and His188 each coordinate heme b. His193 serves as a coordination point for a ubiquinone. 4 consecutive transmembrane segments (helical) span residues 218–238, 280–300, 312–332, and 339–358; these read NKDM…LSFL, LGGT…PFTH, MTQT…WTAT, and FMFI…FMNP.

The protein belongs to the cytochrome b family. The cytochrome bc1 complex contains 3 respiratory subunits (MT-CYB, CYC1 and UQCRFS1), 2 core proteins (UQCRC1 and UQCRC2) and probably 6 low-molecular weight proteins. Heme b is required as a cofactor.

Its subcellular location is the mitochondrion inner membrane. Its function is as follows. Component of the ubiquinol-cytochrome c reductase complex (complex III or cytochrome b-c1 complex) that is part of the mitochondrial respiratory chain. The b-c1 complex mediates electron transfer from ubiquinol to cytochrome c. Contributes to the generation of a proton gradient across the mitochondrial membrane that is then used for ATP synthesis. The polypeptide is Cytochrome b (MT-CYB) (Elapsoidea nigra (Usambara garter snake)).